The chain runs to 1774 residues: 6-methylsalicylic acid synthase (1774 aa).

Over residues 1–14 (MHSAATSTYPSGKT) the composition is skewed to polar residues. The disordered stretch occupies residues 1–21 (MHSAATSTYPSGKTSPAPVGT). Positions 32 to 457 (SNDVAVVGMA…GTVSHAVIEE (426 aa)) constitute a Ketosynthase family 3 (KS3) domain. An acyltransferase region spans residues 186 to 238 (RISYHLNLMGPSTAVDAACASSLVAIHHGVQAIRLGESKVAIVGGVNALCGPG). Catalysis depends on for beta-ketoacyl synthase activity residues Cys204, His339, and His379. Residues 642–676 (NGITPQAVIGHSVGEIAASVVAGALSPAEGALIVT) are acetyl/malonyl transferases. Catalysis depends on Ser653, which acts as the For malonyltransferase activity. Positions 926–1045 (HTLLGQRIPV…AYWDRKVAGS (120 aa)) are N-terminal hotdog fold. The 277-residue stretch at 926–1202 (HTLLGQRIPV…FSEIEGTPGV (277 aa)) folds into the PKS/mFAS DH domain. His958 functions as the Proton acceptor; for dehydratase activity in the catalytic mechanism. The tract at residues 1059 to 1202 (VTKLADNFSI…FSEIEGTPGV (144 aa)) is C-terminal hotdog fold. Asp1123 serves as the catalytic Proton donor; for dehydratase activity. The 2-oxoacyl reductase stretch occupies residues 1403-1450 (GPRLLPRPEGTYLITGGLGVLGLEVADFLVEKGARRLLLISRRALPPR). 1419-1424 (GLGVLG) lines the NADP(+) pocket. One can recognise a Carrier domain in the interval 1698 to 1772 (AYLDEKIRGC…HLAVWFAEKL (75 aa)). An O-(pantetheine 4'-phosphoryl)serine modification is found at Ser1732.

In terms of assembly, homomultimer.

The catalysed reaction is 3 malonyl-CoA + acetyl-CoA + NADPH + 3 H(+) = 6-methylsalicylate + 3 CO2 + NADP(+) + 4 CoA + H2O. It functions in the pathway mycotoxin biosynthesis; patulin biosynthesis. This multifunctional enzyme is a polyketide synthase. It catalyzes a total of 11 steps by seven different component enzymes, in the biosynthesis of the antibiotic patulin. This chain is 6-methylsalicylic acid synthase, found in Penicillium patulum (Penicillium griseofulvum).